A 278-amino-acid chain; its full sequence is 3-methyl-2-oxobutanoate hydroxymethyltransferase (278 aa).

Positions 43 and 82 each coordinate Mg(2+). Residues 43–44 (DS), Asp82, and Lys112 each bind 3-methyl-2-oxobutanoate. Glu114 provides a ligand contact to Mg(2+). The active-site Proton acceptor is the Glu181.

Belongs to the PanB family. In terms of assembly, homodecamer; pentamer of dimers. The cofactor is Mg(2+).

It localises to the cytoplasm. The enzyme catalyses 3-methyl-2-oxobutanoate + (6R)-5,10-methylene-5,6,7,8-tetrahydrofolate + H2O = 2-dehydropantoate + (6S)-5,6,7,8-tetrahydrofolate. Its pathway is cofactor biosynthesis; (R)-pantothenate biosynthesis; (R)-pantoate from 3-methyl-2-oxobutanoate: step 1/2. Functionally, catalyzes the reversible reaction in which hydroxymethyl group from 5,10-methylenetetrahydrofolate is transferred onto alpha-ketoisovalerate to form ketopantoate. This Bacillus cereus (strain G9842) protein is 3-methyl-2-oxobutanoate hydroxymethyltransferase.